The primary structure comprises 922 residues: Pertactin autotransporter (922 aa).

The first 34 residues, 1–34 (MNMSLSRIVKAAPLRRTTLAMALGALGAAPAAYA), serve as a signal peptide directing secretion. The Cell attachment site; involved in adhesion to various eukaryotic cell lines motif lies at 260-262 (RGD). Tandem repeats lie at residues 266 to 270 (GGAVP), 271 to 275 (GGAVP), and 276 to 280 (GGAVP). Residues 266-290 (GGAVPGGAVPGGAVPGGFGPLLDGW) form a 4 X 5 AA tandem repeats of G-G-A-V-P region. The stretch at 281 to 285 (GGFGP) is one 4; approximate repeat. Positions 561-619 (SLVGAKAPPAPKPAPQPGPQPGPQPPQPPQPPQPPQPPQPPQRQPEAPAPQPPAGRELS) are disordered. Over residues 568-613 (PPAPKPAPQPGPQPGPQPPQPPQPPQPPQPPQPPQRQPEAPAPQPP) the composition is skewed to pro residues. A 9 X 3 AA approximate repeats of P-Q-P region spans residues 575-603 (PQPGPQPGPQPPQPPQPPQPPQPPQPPQR). An Autotransporter domain is found at 654-922 (LNPDAGGAWG…TFHAGYRYSW (269 aa)).

Monomer.

It localises to the periplasm. It is found in the secreted. Its subcellular location is the cell surface. The protein localises to the cell outer membrane. Its function is as follows. Agglutinogen that binds to eukaryotic cells; a process mediated by the R-G-D sequence. Pertactin may have a role in bacterial adhesion, and thus play a role in virulence. May contribute to the disease state of whooping cough. This Bordetella parapertussis (strain 12822 / ATCC BAA-587 / NCTC 13253) protein is Pertactin autotransporter (prn).